Here is a 146-residue protein sequence, read N- to C-terminus: Snaclec 1 (146 aa).

The signal sequence occupies residues 1-23 (MGRFIFMSFGLLVVFLSLSGTGA). 3 cysteine pairs are disulfide-bonded: C25-C36, C53-C142, and C119-C134. Residues 32–143 (YEGHCYRVFQ…CSRTYSFVCK (112 aa)) form the C-type lectin domain.

It belongs to the snaclec family. Heterodimer; disulfide-linked. Expressed by the venom gland.

The protein localises to the secreted. Its function is as follows. Interferes with one step of hemostasis (modulation of platelet aggregation, or coagulation cascade, for example). The polypeptide is Snaclec 1 (Sistrurus catenatus edwardsii (Desert massasauga)).